We begin with the raw amino-acid sequence, 330 residues long: Ketol-acid reductoisomerase (NADP(+)) (330 aa).

Residues M1–T182 form the KARI N-terminal Rossmann domain. NADP(+) contacts are provided by residues Y25 to Q28, R48, S51, S53, and D83 to Q86. The active site involves H108. G134 contacts NADP(+). One can recognise a KARI C-terminal knotted domain in the interval T183–L328. Positions 191, 195, 227, and 231 each coordinate Mg(2+). A substrate-binding site is contributed by S252.

The protein belongs to the ketol-acid reductoisomerase family. Mg(2+) serves as cofactor.

It carries out the reaction (2R)-2,3-dihydroxy-3-methylbutanoate + NADP(+) = (2S)-2-acetolactate + NADPH + H(+). The enzyme catalyses (2R,3R)-2,3-dihydroxy-3-methylpentanoate + NADP(+) = (S)-2-ethyl-2-hydroxy-3-oxobutanoate + NADPH + H(+). Its pathway is amino-acid biosynthesis; L-isoleucine biosynthesis; L-isoleucine from 2-oxobutanoate: step 2/4. It participates in amino-acid biosynthesis; L-valine biosynthesis; L-valine from pyruvate: step 2/4. Its function is as follows. Involved in the biosynthesis of branched-chain amino acids (BCAA). Catalyzes an alkyl-migration followed by a ketol-acid reduction of (S)-2-acetolactate (S2AL) to yield (R)-2,3-dihydroxy-isovalerate. In the isomerase reaction, S2AL is rearranged via a Mg-dependent methyl migration to produce 3-hydroxy-3-methyl-2-ketobutyrate (HMKB). In the reductase reaction, this 2-ketoacid undergoes a metal-dependent reduction by NADPH to yield (R)-2,3-dihydroxy-isovalerate. In Moorella thermoacetica (strain ATCC 39073 / JCM 9320), this protein is Ketol-acid reductoisomerase (NADP(+)).